A 312-amino-acid polypeptide reads, in one-letter code: 2,3-dihydroxyphenylpropionate/2,3-dihydroxicinnamic acid 1,2-dioxygenase (312 aa).

His-115 (proton donor) is an active-site residue. His-179 functions as the Proton acceptor in the catalytic mechanism.

This sequence belongs to the LigB/MhpB extradiol dioxygenase family. Homotetramer. The cofactor is Fe(2+).

It carries out the reaction 3-(2,3-dihydroxyphenyl)propanoate + O2 = (2Z,4E)-2-hydroxy-6-oxonona-2,4-dienedioate + H(+). It catalyses the reaction (2E)-3-(2,3-dihydroxyphenyl)prop-2-enoate + O2 = (2Z,4E,7E)-2-hydroxy-6-oxonona-2,4,7-trienedioate + H(+). The protein operates within aromatic compound metabolism; 3-phenylpropanoate degradation. In terms of biological role, catalyzes the non-heme iron(II)-dependent oxidative cleavage of 2,3-dihydroxyphenylpropionic acid and 2,3-dihydroxicinnamic acid into 2-hydroxy-6-ketononadienedioate and 2-hydroxy-6-ketononatrienedioate, respectively. This chain is 2,3-dihydroxyphenylpropionate/2,3-dihydroxicinnamic acid 1,2-dioxygenase, found in Mycolicibacterium paratuberculosis (strain ATCC BAA-968 / K-10) (Mycobacterium paratuberculosis).